A 127-amino-acid chain; its full sequence is Small ribosomal subunit protein uS12 (127 aa).

Asp89 carries the post-translational modification 3-methylthioaspartic acid. The tract at residues 101–127 is disordered; it reads ALDTSGVAGRTQRRSKYGAKRPKEAKK. Positions 111–127 are enriched in basic residues; the sequence is TQRRSKYGAKRPKEAKK.

The protein belongs to the universal ribosomal protein uS12 family. As to quaternary structure, part of the 30S ribosomal subunit. Contacts proteins S8 and S17. May interact with IF1 in the 30S initiation complex.

Its function is as follows. With S4 and S5 plays an important role in translational accuracy. In terms of biological role, interacts with and stabilizes bases of the 16S rRNA that are involved in tRNA selection in the A site and with the mRNA backbone. Located at the interface of the 30S and 50S subunits, it traverses the body of the 30S subunit contacting proteins on the other side and probably holding the rRNA structure together. The combined cluster of proteins S8, S12 and S17 appears to hold together the shoulder and platform of the 30S subunit. This chain is Small ribosomal subunit protein uS12, found in Flavobacterium psychrophilum (strain ATCC 49511 / DSM 21280 / CIP 103535 / JIP02/86).